Reading from the N-terminus, the 544-residue chain is Protein nucleotidyltransferase YdiU (544 aa).

Gly-133, Gly-135, Arg-136, Lys-155, Asp-167, Gly-168, Arg-218, and Arg-225 together coordinate ATP. The Proton acceptor role is filled by Asp-294. Residues Asn-295 and Asp-304 each coordinate Mg(2+). Asp-304 contacts ATP.

It belongs to the SELO family. The cofactor is Mg(2+). Mn(2+) is required as a cofactor.

The enzyme catalyses L-seryl-[protein] + ATP = 3-O-(5'-adenylyl)-L-seryl-[protein] + diphosphate. The catalysed reaction is L-threonyl-[protein] + ATP = 3-O-(5'-adenylyl)-L-threonyl-[protein] + diphosphate. It carries out the reaction L-tyrosyl-[protein] + ATP = O-(5'-adenylyl)-L-tyrosyl-[protein] + diphosphate. It catalyses the reaction L-histidyl-[protein] + UTP = N(tele)-(5'-uridylyl)-L-histidyl-[protein] + diphosphate. The enzyme catalyses L-seryl-[protein] + UTP = O-(5'-uridylyl)-L-seryl-[protein] + diphosphate. The catalysed reaction is L-tyrosyl-[protein] + UTP = O-(5'-uridylyl)-L-tyrosyl-[protein] + diphosphate. Functionally, nucleotidyltransferase involved in the post-translational modification of proteins. It can catalyze the addition of adenosine monophosphate (AMP) or uridine monophosphate (UMP) to a protein, resulting in modifications known as AMPylation and UMPylation. The polypeptide is Protein nucleotidyltransferase YdiU (Cupriavidus metallidurans (strain ATCC 43123 / DSM 2839 / NBRC 102507 / CH34) (Ralstonia metallidurans)).